The following is a 433-amino-acid chain: Mitochondrial distribution and morphology protein 12 (433 aa).

Residues 1-433 (MSIDIDWERA…VYPSFWTFLI (433 aa)) enclose the SMP-LTD domain. Disordered stretches follow at residues 62–113 (LSDP…GGQM), 180–279 (TPLG…RMRE), and 356–376 (GPET…SPRR). Residues 81–96 (SEERSPTREPVDRYGN) are compositionally biased toward basic and acidic residues. Polar residues predominate over residues 214-236 (SAQSRPSTANTGNTLPSRDSMSV). Residues 268 to 279 (PLDDTPPRRMRE) show a composition bias toward basic and acidic residues.

This sequence belongs to the MDM12 family. As to quaternary structure, component of the ER-mitochondria encounter structure (ERMES) or MDM complex, composed of MMM1, MDM10, MDM12 and MDM34. An MMM1 homodimer associates with one molecule of MDM12 on each side in a pairwise head-to-tail manner, and the SMP-LTD domains of MMM1 and MDM12 generate a continuous hydrophobic tunnel for phospholipid trafficking.

It is found in the mitochondrion outer membrane. The protein resides in the endoplasmic reticulum membrane. Its function is as follows. Component of the ERMES/MDM complex, which serves as a molecular tether to connect the endoplasmic reticulum (ER) and mitochondria. Components of this complex are involved in the control of mitochondrial shape and protein biogenesis, and function in nonvesicular lipid trafficking between the ER and mitochondria. MDM12 is required for the interaction of the ER-resident membrane protein MMM1 and the outer mitochondrial membrane-resident beta-barrel protein MDM10. The MDM12-MMM1 subcomplex functions in the major beta-barrel assembly pathway that is responsible for biogenesis of all mitochondrial outer membrane beta-barrel proteins, and acts in a late step after the SAM complex. The MDM10-MDM12-MMM1 subcomplex further acts in the TOM40-specific pathway after the action of the MDM12-MMM1 complex. Essential for establishing and maintaining the structure of mitochondria and maintenance of mtDNA nucleoids. The sequence is that of Mitochondrial distribution and morphology protein 12 from Ajellomyces capsulatus (strain NAm1 / WU24) (Darling's disease fungus).